The primary structure comprises 215 residues: Outer-membrane lipoprotein LolB (215 aa).

The signal sequence occupies residues 1–21 (MLIPKKYYLLIILLSNCLLAS). The N-palmitoyl cysteine moiety is linked to residue Cys-22. Cys-22 carries S-diacylglycerol cysteine lipidation.

Belongs to the LolB family. In terms of assembly, monomer.

It is found in the cell outer membrane. Functionally, plays a critical role in the incorporation of lipoproteins in the outer membrane after they are released by the LolA protein. The polypeptide is Outer-membrane lipoprotein LolB (Baumannia cicadellinicola subsp. Homalodisca coagulata).